We begin with the raw amino-acid sequence, 131 residues long: MINDIISDSLTRIRNAGMRKLETTKLLHSKAVEALVGIFQAKGYIESFNVIEEDKKKFINVVLKYDEKGKSVINNLKRISKPGRRVYKGKDEIKRFKNGYGTIVVSTSHGVLANDEAYKAGVGGEILCTIW.

It belongs to the universal ribosomal protein uS8 family. In terms of assembly, part of the 30S ribosomal subunit. Contacts proteins S5 and S12.

One of the primary rRNA binding proteins, it binds directly to 16S rRNA central domain where it helps coordinate assembly of the platform of the 30S subunit. The chain is Small ribosomal subunit protein uS8 from Campylobacter jejuni subsp. doylei (strain ATCC BAA-1458 / RM4099 / 269.97).